Here is a 106-residue protein sequence, read N- to C-terminus: Foxo1-corepressor (106 aa).

The interval 1–44 (MGGPTRRHQEEGSAECLGGPSTRAAPGPGLRDFHFTTAGPSKAD) is disordered. A Nuclear export signal motif is present at residues 78-87 (IGTLYIRLDL). T93 is modified (phosphothreonine; by PKA).

Interacts with FOXO1 (via N-terminal domain); the interaction is direct, occurs in a forskolin-independent manner that prevents SIRT1 binding to FOXO1. Interacts with FOXO3. Does not interact with FOXO4. In terms of processing, phosphorylated at Thr-93 by PKA, leading to import into the nucleus. Expressed in adipocytes. Expressed in brown and white adipose tissue but not in liver. Protein levels in brown and white adipose tissues decrease following fasting (at protein level). Expressed in white and brown adipose tissues. Expressed in adipocytes. Not expressed in liver, skeletal muscle and brain.

It is found in the cytoplasm. The protein resides in the cytosol. It localises to the nucleus. Regulator of adipocytes that acts by repressing FOXO1 transcriptional activity. Acts by promoting acetylation of FOXO1, both by preventing the interaction between FOXO1 and SIRT1 deacetylase, and by mediating acetyltransferase activity in vitro. Regulates insulin sensitivity and energy metabolism. The protein is Foxo1-corepressor (Fcor) of Mus musculus (Mouse).